The chain runs to 1391 residues: CAP-Gly domain-containing linker protein 1 (1391 aa).

The disordered stretch occupies residues 1-53 (MSMLKPSGLKAPTKILKPGSTALKTPAAAAAPVEKTIPSEKASGPPSSETQEE). S48 is subject to Phosphoserine. A Phosphothreonine modification is found at T50. The 43-residue stretch at 78–120 (GETQFAPGQWAGIVLDEPIGKNDGSVAGVRYFQCEPLKGIFTR) folds into the CAP-Gly 1 domain. The interval 97–101 (GKNDG) is important for tubulin binding. Positions 129–182 (QAEDEANGLQAAPGRTASPLSTAAATMVSSSPATPSNIPHKPSQSTAKEPSATP) are disordered. S146 carries the phosphoserine modification. Residues 146–182 (SPLSTAAATMVSSSPATPSNIPHKPSQSTAKEPSATP) show a composition bias toward polar residues. T181 is modified (phosphothreonine). A phosphoserine mark is found at S194, S196, S199, and S203. In terms of domain architecture, CAP-Gly 2 spans 231 to 273 (GETDFAKGEWCGVELDEPLGKNDGAVAGTRYFQCQPKYGLFAP). Residues 302–331 (TPASLKRSPSASSLSSMSSVASSVSSKPSR) are compositionally biased toward low complexity. The disordered stretch occupies residues 302–336 (TPASLKRSPSASSLSSMSSVASSVSSKPSRTGLLT). A Phosphoserine modification is found at S309. A Phosphoserine; by PKA modification is found at S311. Residues S314, S347, and S1189 each carry the phosphoserine modification. A coiled-coil region spans residues 349 to 1306 (TTALQEALKE…VEMMSEAALN (958 aa)). The segment at 1251-1272 (KRQLSSSSGNTDAQAEEDERAQ) is disordered. S1317 is subject to Phosphoserine. A CCHC-type zinc finger spans residues 1370–1387 (PYCEICEMFGHWATNCND).

Interacts with MTOR; phosphorylates and regulates CLIP1. Interacts (via CAP-Gly domains) with tubulin. Interacts with SLAIN2. Interacts with TUBA1B, MAPRE1 and MAPRE3. Interacts (via zinc finger) with DCTN1. Binds preferentially to tyrosinated microtubules, and only marginally to detyrosinated microtubules. Phosphorylated. Phosphorylation induces conformational changes by increasing the affinity of the N-terminus for C-terminus, resulting in inhibition of its function thus decreasing its binding to microtubules and DCTN1. Exhibits a folded, autoinhibited conformation when phosphorylated and an open conformation when dephosphorylated with increased binding affinity to microtubules and DCTN1. Phosphorylation regulates its recruitment to tyrosinated microtubules and the recruitment of vesicular cargo to microtubules in neurons. Phosphorylation by MTOR may positively regulate CLIP1 association with microtubules. Expressed in the testes (at protein level).

It localises to the cytoplasm. Its subcellular location is the cytoskeleton. It is found in the cytoplasmic vesicle membrane. The protein resides in the cell projection. The protein localises to the ruffle. Functionally, binds to the plus end of microtubules and regulates the dynamics of the microtubule cytoskeleton. Promotes microtubule growth and microtubule bundling. Links cytoplasmic vesicles to microtubules and thereby plays an important role in intracellular vesicle trafficking. Plays a role macropinocytosis and endosome trafficking. This Mus musculus (Mouse) protein is CAP-Gly domain-containing linker protein 1 (Clip1).